A 345-amino-acid polypeptide reads, in one-letter code: Large ribosomal subunit protein uL10 (345 aa).

Positions 303 to 345 (SLPQTAAPQQTPQPTEAPKEEAQEEKKEGPSEEEIAGSLASLF) are disordered. Residues 305 to 318 (PQTAAPQQTPQPTE) show a composition bias toward low complexity. Residues 319–332 (APKEEAQEEKKEGP) are compositionally biased toward basic and acidic residues.

Belongs to the universal ribosomal protein uL10 family. In terms of assembly, part of the 50S ribosomal subunit. Forms part of the ribosomal stalk which helps the ribosome interact with GTP-bound translation factors. Forms a heptameric L10(L12)2(L12)2(L12)2 complex, where L10 forms an elongated spine to which the L12 dimers bind in a sequential fashion.

Its function is as follows. Forms part of the ribosomal stalk, playing a central role in the interaction of the ribosome with GTP-bound translation factors. The sequence is that of Large ribosomal subunit protein uL10 from Pyrobaculum aerophilum (strain ATCC 51768 / DSM 7523 / JCM 9630 / CIP 104966 / NBRC 100827 / IM2).